We begin with the raw amino-acid sequence, 122 residues long: Large ribosomal subunit protein bL12 (122 aa).

This sequence belongs to the bacterial ribosomal protein bL12 family. Homodimer. Part of the ribosomal stalk of the 50S ribosomal subunit. Forms a multimeric L10(L12)X complex, where L10 forms an elongated spine to which 2 to 4 L12 dimers bind in a sequential fashion. Binds GTP-bound translation factors.

Functionally, forms part of the ribosomal stalk which helps the ribosome interact with GTP-bound translation factors. Is thus essential for accurate translation. In Mycoplasma capricolum subsp. capricolum (strain California kid / ATCC 27343 / NCTC 10154), this protein is Large ribosomal subunit protein bL12.